Reading from the N-terminus, the 276-residue chain is Formamidopyrimidine-DNA glycosylase (276 aa).

Catalysis depends on P2, which acts as the Schiff-base intermediate with DNA. E3 acts as the Proton donor in catalysis. Residue K58 is the Proton donor; for beta-elimination activity of the active site. 3 residues coordinate DNA: H94, R112, and R157. The FPG-type zinc finger occupies F242–R276. R266 serves as the catalytic Proton donor; for delta-elimination activity.

This sequence belongs to the FPG family. Monomer. It depends on Zn(2+) as a cofactor.

The enzyme catalyses Hydrolysis of DNA containing ring-opened 7-methylguanine residues, releasing 2,6-diamino-4-hydroxy-5-(N-methyl)formamidopyrimidine.. It carries out the reaction 2'-deoxyribonucleotide-(2'-deoxyribose 5'-phosphate)-2'-deoxyribonucleotide-DNA = a 3'-end 2'-deoxyribonucleotide-(2,3-dehydro-2,3-deoxyribose 5'-phosphate)-DNA + a 5'-end 5'-phospho-2'-deoxyribonucleoside-DNA + H(+). Its function is as follows. Involved in base excision repair of DNA damaged by oxidation or by mutagenic agents. Acts as a DNA glycosylase that recognizes and removes damaged bases. Has a preference for oxidized purines, such as 7,8-dihydro-8-oxoguanine (8-oxoG). Has AP (apurinic/apyrimidinic) lyase activity and introduces nicks in the DNA strand. Cleaves the DNA backbone by beta-delta elimination to generate a single-strand break at the site of the removed base with both 3'- and 5'-phosphates. In Burkholderia pseudomallei (strain 1710b), this protein is Formamidopyrimidine-DNA glycosylase.